The sequence spans 338 residues: Histidinol-phosphate aminotransferase (338 aa).

At lysine 204 the chain carries N6-(pyridoxal phosphate)lysine.

The protein belongs to the class-II pyridoxal-phosphate-dependent aminotransferase family. Histidinol-phosphate aminotransferase subfamily. Pyridoxal 5'-phosphate serves as cofactor.

It catalyses the reaction L-histidinol phosphate + 2-oxoglutarate = 3-(imidazol-4-yl)-2-oxopropyl phosphate + L-glutamate. It participates in amino-acid biosynthesis; L-histidine biosynthesis; L-histidine from 5-phospho-alpha-D-ribose 1-diphosphate: step 7/9. This chain is Histidinol-phosphate aminotransferase, found in Pyrococcus furiosus (strain ATCC 43587 / DSM 3638 / JCM 8422 / Vc1).